The sequence spans 89 residues: Small ribosomal subunit protein uS15 (89 aa).

Positions methionine 1–glycine 23 are disordered.

Belongs to the universal ribosomal protein uS15 family. In terms of assembly, part of the 30S ribosomal subunit. Forms a bridge to the 50S subunit in the 70S ribosome, contacting the 23S rRNA.

Functionally, one of the primary rRNA binding proteins, it binds directly to 16S rRNA where it helps nucleate assembly of the platform of the 30S subunit by binding and bridging several RNA helices of the 16S rRNA. In terms of biological role, forms an intersubunit bridge (bridge B4) with the 23S rRNA of the 50S subunit in the ribosome. This is Small ribosomal subunit protein uS15 from Treponema pallidum (strain Nichols).